A 282-amino-acid polypeptide reads, in one-letter code: Probable endonuclease 4 (282 aa).

9 residues coordinate Zn(2+): histidine 67, histidine 107, glutamate 144, aspartate 178, histidine 181, histidine 215, aspartate 228, histidine 230, and glutamate 260.

This sequence belongs to the AP endonuclease 2 family. It depends on Zn(2+) as a cofactor.

It catalyses the reaction Endonucleolytic cleavage to 5'-phosphooligonucleotide end-products.. Functionally, endonuclease IV plays a role in DNA repair. It cleaves phosphodiester bonds at apurinic or apyrimidinic (AP) sites, generating a 3'-hydroxyl group and a 5'-terminal sugar phosphate. The protein is Probable endonuclease 4 of Methanoculleus marisnigri (strain ATCC 35101 / DSM 1498 / JR1).